Here is a 501-residue protein sequence, read N- to C-terminus: Dipeptide and tripeptide permease A (501 aa).

The Cytoplasmic segment spans residues M1–R34. Residues F35–S55 traverse the membrane as a helical segment. Over E56 to S59 the chain is Periplasmic. Residues I60 to L80 form a helical membrane-spanning segment. Topologically, residues G81–R89 are cytoplasmic. Residues V90–H110 traverse the membrane as a helical segment. Residue D111 is a topological domain, periplasmic. A helical transmembrane segment spans residues V112–N132. The Cytoplasmic portion of the chain corresponds to P133 to T153. The helical transmembrane segment at M154–A174 threads the bilayer. Topologically, residues A175–G178 are periplasmic. The helical transmembrane segment at W179–F199 threads the bilayer. Residues C200–H217 are Cytoplasmic-facing. Residues F218–L238 traverse the membrane as a helical segment. The Periplasmic segment spans residues L239–R246. Residues M247 to M267 form a helical membrane-spanning segment. At Q268–K274 the chain is on the cytoplasmic side. A helical membrane pass occupies residues M275–M295. The Periplasmic segment spans residues P296–Q320. A helical membrane pass occupies residues Y321–N341. The Cytoplasmic portion of the chain corresponds to K342–K352. Residues F353–F373 form a helical membrane-spanning segment. Topologically, residues A374 to N383 are periplasmic. The chain crosses the membrane as a helical span at residues W384–L404. Residues A405–R414 are Cytoplasmic-facing. Residues L415 to G435 form a helical membrane-spanning segment. Over Y436 to R459 the chain is Periplasmic. Residues V460–P480 form a helical membrane-spanning segment. Topologically, residues K481 to A501 are cytoplasmic.

The protein belongs to the major facilitator superfamily. Proton-dependent oligopeptide transporter (POT/PTR) (TC 2.A.17) family. DtpA subfamily.

Its subcellular location is the cell inner membrane. Proton-dependent permease that transports di- and tripeptides. The chain is Dipeptide and tripeptide permease A from Citrobacter koseri (strain ATCC BAA-895 / CDC 4225-83 / SGSC4696).